We begin with the raw amino-acid sequence, 313 residues long: Glucosyl-dolichyl phosphate glucuronosyltransferase (313 aa).

The helical transmembrane segment at 284–304 (LIAIFVFTAAVGFGYVYGLLT) threads the bilayer.

This sequence belongs to the glycosyltransferase 2 family.

Its subcellular location is the cell membrane. The catalysed reaction is an archaeal dolichyl alpha-D-glucosyl phosphate + UDP-alpha-D-glucuronate = an archaeal dolichyl beta-D-glucuronosyl-(1-&gt;4)-alpha-D-glucosyl phosphate + UDP + H(+). It functions in the pathway cell surface structure biogenesis; S-layer biogenesis. In terms of biological role, involved in the protein N-glycosylation pathway responsible for the assembly and attachment of an N-linked pentasaccharide that decorates the S-layer glycoprotein and flagellins. Catalyzes the transfer of a glucuronate residue (GlcA) to a glucose residue already bound to a dolichol phosphate (DolP), a compound that serves as a glycan lipid carrier in Archaea. In vitro, is able to add GlcA to DolP-Glc in which the omega-position isoprene is not saturated. However, the likely physiological lipid substrate is alpha,omega-saturated. This is Glucosyl-dolichyl phosphate glucuronosyltransferase from Haloferax volcanii (strain ATCC 29605 / DSM 3757 / JCM 8879 / NBRC 14742 / NCIMB 2012 / VKM B-1768 / DS2) (Halobacterium volcanii).